The primary structure comprises 543 residues: Protein lin-14 (543 aa).

2 disordered regions span residues 165–228 (PNGH…SSNH) and 268–291 (APAT…PRKP). Over residues 177–213 (SMQTDEQQVKWSSPSSVDSNGQKTDSSAASAGDNQNI) the composition is skewed to polar residues. Residues 268-282 (APATNGTTNGATKAA) show a composition bias toward low complexity.

Cleaved by caspase ced-3 in vitro.

It is found in the nucleus. Its function is as follows. Heterochronic protein which controls the choice of stage specific cell fates. Involved in the temporal progression of vulval fate patterning, possibly by inhibiting lin-12. Acts as a transcription factor involved in the stage-specific repression of insulin/insulin-like growth factor gene ins-33. The chain is Protein lin-14 (lin-14) from Caenorhabditis briggsae.